A 596-amino-acid chain; its full sequence is Sodium/mannose cotransporter SLC5A10 (596 aa).

Residues 1-15 (MAANSTSDLHTPGTQ) lie on the Extracellular side of the membrane. A glycan (N-linked (GlcNAc...) asparagine) is linked at N4. The chain crosses the membrane as a helical span at residues 16–36 (LSVADIIVITVYFALNVAVGI). The Cytoplasmic segment spans residues 37–72 (WSSCRASRNTVNGYFLAGRDMTWWPIGASLFASSEG). A helical transmembrane segment spans residues 73–93 (SGLFIGLAGSGAAGGLAVAGF). The Extracellular portion of the chain corresponds to 94–99 (EWNATY). Residue N96 is glycosylated (N-linked (GlcNAc...) asparagine). The chain crosses the membrane as a helical span at residues 100–120 (VLLALAWVFVPIYISSEIVTL). At 121-149 (PEYIQKRYGGQRIRMYLSVLSLLLSVFTK) the chain is on the cytoplasmic side. S141 and S145 each carry phosphoserine. The residue at position 148 (T148) is a Phosphothreonine. A helical membrane pass occupies residues 150–170 (ISLDLYAGALFVHICLGWNFY). The Extracellular portion of the chain corresponds to 171–173 (LST). Residues 174 to 194 (ILTLGITALYTIAGGLAAVIY) form a helical membrane-spanning segment. Over 195 to 200 (TDALQT) the chain is Cytoplasmic. Residues 201–221 (LIMVVGAVILTIKAFDQIGGY) form a helical membrane-spanning segment. At 222–264 (GQLEAAYAQAIPSRTIANTTCHLPRTDAMHMFRDPHTGDLPWT) the chain is on the extracellular side. A helical transmembrane segment spans residues 265–285 (GMTFGLTIMATWYWCTDQVIV). Over 286–300 (QRSLSARDLNHAKAG) the chain is Cytoplasmic. A helical transmembrane segment spans residues 301 to 321 (SILASYLKMLPMGLIIMPGMI). The Extracellular segment spans residues 322-355 (SRALFPDDVGCVVPSECLRACGAEVGCSNIAYPK). A helical membrane pass occupies residues 356-376 (LVMELMPIGLRGLMIAVMLAA). Residues 377–409 (LMSSLTSIFNSSSTLFTMDIWRRLRPRSGEREL) lie on the Cytoplasmic side of the membrane. Residues 410–430 (LLVGRLVIVALIGVSVAWIPV) form a helical membrane-spanning segment. Over 431–443 (LQDSNSGQLFIYM) the chain is Extracellular. A helical membrane pass occupies residues 444–464 (QSVTSSLAPPVTAVFVLGVFW). Topologically, residues 465–471 (RRANEQG) are cytoplasmic. Residues 472–492 (AFWGLIAGLVVGATRLVLEFL) traverse the membrane as a helical segment. Topologically, residues 493–513 (NPAPPCGEPDTRPAVLGSIHY) are extracellular. A helical transmembrane segment spans residues 514–534 (LHFAVALFALSGAVVVAGSLL). At 535 to 575 (TPPPQSVQIENLTWWTLAQDVPLGTKAGDGQTPQKHAFWAR) the chain is on the cytoplasmic side. A helical membrane pass occupies residues 576–596 (VCGFNAILLMCVNIFFYAYFA).

It belongs to the sodium:solute symporter (SSF) (TC 2.A.21) family. In terms of tissue distribution, predominantly expressed at high levels in kidney. Very low expression is detected in testes. As to expression, expressed in kidney. The most abundant isoform expressed in kidney.

It localises to the apical cell membrane. It catalyses the reaction D-mannose(out) + Na(+)(out) = D-mannose(in) + Na(+)(in). It carries out the reaction D-fructopyranose(out) + Na(+)(out) = D-fructopyranose(in) + Na(+)(in). With respect to regulation, inhibited by phlorizin. In terms of biological role, electrogenic Na+-coupled sugar symporter that actively transports D-mannose or D-fructose at the plasma membrane, with a Na+ to sugar coupling ratio of 1:1. Transporter activity is driven by a transmembrane Na+ electrochemical gradient set by the Na+/K+ pump. Exclusively recognizes sugar substrates having a pyranose ring with an axial hydroxyl group on carbon 2. Has likely evolved to enable renal reabsorption of D-mannose, an important constituent of oligosaccharide chains of glycoproteins. Contributes to dietary D-fructose reabsorption from glomerular filtrate across the brush border of the kidney. Its function is as follows. Appears to have no transporter activity. This chain is Sodium/mannose cotransporter SLC5A10 (SLC5A10), found in Homo sapiens (Human).